Consider the following 280-residue polypeptide: MSPYISLLKPRVIWLLILASVAGYIYGGGGVDSRLFSLLAVAFLSTGGSAAFNHYWERDIDALMTRTFKRPLPSGLITPNAALAYSLALSATGISLGFLLLGLLPGLFVLLGWLFYAVVYTIVLKRRTWLNIFGGGFAGNAVFLGGYALAKGTVDLPAVLISFAIYLWTPSHIWALAFKYRGDYKRAGVPMLPALIKEERAVAVISAINAAAAAYILWLYLQFGGGAGGAIVALGVAATIATSIYAAVKKTEEAMWKMYKASSPMLTLFLIALMIQRYRL.

A run of 9 helical transmembrane segments spans residues 12–32, 35–55, 76–96, 98–118, 129–149, 158–178, 199–221, 226–248, and 255–275; these read VIWL…GGVD, LFSL…FNHY, LITP…GISL, FLLL…FYAV, WLNI…GYAL, AVLI…ALAF, ERAV…WLYL, GAGG…YAAV, and MWKM…ALMI.

This sequence belongs to the UbiA prenyltransferase family. Protoheme IX farnesyltransferase subfamily.

It is found in the cell membrane. The enzyme catalyses heme b + (2E,6E)-farnesyl diphosphate + H2O = Fe(II)-heme o + diphosphate. The protein operates within porphyrin-containing compound metabolism; heme O biosynthesis; heme O from protoheme: step 1/1. Its function is as follows. Converts heme B (protoheme IX) to heme O by substitution of the vinyl group on carbon 2 of heme B porphyrin ring with a hydroxyethyl farnesyl side group. This is Protoheme IX farnesyltransferase 2 from Pyrobaculum aerophilum (strain ATCC 51768 / DSM 7523 / JCM 9630 / CIP 104966 / NBRC 100827 / IM2).